The primary structure comprises 848 residues: Protein NETWORKED 2C (848 aa).

The 81-residue stretch at 10 to 90 (YSWWWASHVR…ERYDHISKEL (81 aa)) folds into the NAB domain. A disordered region spans residues 108–141 (FAMNEDDDDDAPVSPRHHKNKTSNKNVPKVPDLP). 4 coiled-coil regions span residues 172-204 (LSKTEAVEEIDKLQKEILVLQTEKEFVKTSYEN), 241-278 (EAQILMSTTALKSCQEKLEELRDKQEQNVKEVDVSRKQ), 305-454 (SEKE…KATN), and 752-797 (AKFE…SEEF).

It belongs to the NET family.

In terms of biological role, plant-specific actin binding protein. May be part of a membrane-cytoskeletal adapter complex. This is Protein NETWORKED 2C from Arabidopsis thaliana (Mouse-ear cress).